A 103-amino-acid polypeptide reads, in one-letter code: Integration host factor subunit alpha (103 aa).

Belongs to the bacterial histone-like protein family. Heterodimer of an alpha and a beta chain.

Its function is as follows. This protein is one of the two subunits of integration host factor, a specific DNA-binding protein that functions in genetic recombination as well as in transcriptional and translational control. The chain is Integration host factor subunit alpha from Aromatoleum aromaticum (strain DSM 19018 / LMG 30748 / EbN1) (Azoarcus sp. (strain EbN1)).